The sequence spans 224 residues: LRP chaperone MESD (224 aa).

Residues Met1–Ala29 form the signal peptide. The tract at residues Met1–Gly155 is chaperone domain. 2 disordered regions span residues Tyr28 to Tyr49 and Gly178 to Leu224. Positions Ser156–Lys195 are escort domain. Residues Gly187–Leu224 show a composition bias toward basic and acidic residues. The N-linked (GlcNAc...) asparagine glycan is linked to Asn192. Residues Arg221–Leu224 carry the Prevents secretion from ER motif.

It belongs to the MESD family. Monomer. Interacts with LRP5; the interaction prevents LRP5 from forming aggregates and chaperones LRP6 to the plasma membrane. Interacts with LRP6; the interaction prevents LRP6 from forming aggregates and chaperones LRP6 to the plasma membrane. Interacts with LRP4; the interaction promotes glycosylation of LRP4 and its cell-surface expression. In terms of tissue distribution, expressed in many tissues, but not in skeletal muscles. In the retina expressed in retinal ganglion cells, inner and outer plexiform layers, photoreceptor inner and outer segments and retinal pigment epithelium (at protein level).

The protein localises to the endoplasmic reticulum. In terms of biological role, chaperone specifically assisting the folding of beta-propeller/EGF modules within the family of low-density lipoprotein receptors (LDLRs). Acts as a modulator of the Wnt pathway through chaperoning the coreceptors of the canonical Wnt pathway, LRP5 and LRP6, to the plasma membrane. Essential for specification of embryonic polarity and mesoderm induction. Plays an essential role in neuromuscular junction (NMJ) formation by promoting cell-surface expression of LRP4. May regulate phagocytosis of apoptotic retinal pigment epithelium (RPE) cells. This is LRP chaperone MESD from Mus musculus (Mouse).